We begin with the raw amino-acid sequence, 425 residues long: Metacaspase-1 (425 aa).

Positions 1–110 are disordered; that stretch reads MSYNSNPYNG…PQLPNTQTQS (110 aa). Low complexity predominate over residues 13-28; the sequence is YPPYNTYTRPNYSPNN. Polar residues-rich tracts occupy residues 29–38 and 88–110; these read GSQSNNTVHQ and TGAN…QTQS. Active-site residues include His-214 and Cys-270.

Belongs to the peptidase C14B family.

The protein resides in the cytoplasm. The protein localises to the nucleus. Its function is as follows. Involved in cell death (apoptosis). This is Metacaspase-1 (pca1) from Schizosaccharomyces pombe (strain 972 / ATCC 24843) (Fission yeast).